We begin with the raw amino-acid sequence, 410 residues long: Multifunctional CCA protein (410 aa).

Positions 8 and 11 each coordinate ATP. Glycine 8 and arginine 11 together coordinate CTP. Residues aspartate 21 and aspartate 23 each contribute to the Mg(2+) site. Positions 91, 137, and 140 each coordinate ATP. The CTP site is built by arginine 91, arginine 137, and arginine 140. An HD domain is found at serine 225 to phenylalanine 326.

The protein belongs to the tRNA nucleotidyltransferase/poly(A) polymerase family. Bacterial CCA-adding enzyme type 1 subfamily. Monomer. Can also form homodimers and oligomers. Mg(2+) is required as a cofactor. It depends on Ni(2+) as a cofactor.

It catalyses the reaction a tRNA precursor + 2 CTP + ATP = a tRNA with a 3' CCA end + 3 diphosphate. It carries out the reaction a tRNA with a 3' CCA end + 2 CTP + ATP = a tRNA with a 3' CCACCA end + 3 diphosphate. In terms of biological role, catalyzes the addition and repair of the essential 3'-terminal CCA sequence in tRNAs without using a nucleic acid template. Adds these three nucleotides in the order of C, C, and A to the tRNA nucleotide-73, using CTP and ATP as substrates and producing inorganic pyrophosphate. tRNA 3'-terminal CCA addition is required both for tRNA processing and repair. Also involved in tRNA surveillance by mediating tandem CCA addition to generate a CCACCA at the 3' terminus of unstable tRNAs. While stable tRNAs receive only 3'-terminal CCA, unstable tRNAs are marked with CCACCA and rapidly degraded. The chain is Multifunctional CCA protein from Neisseria gonorrhoeae (strain ATCC 700825 / FA 1090).